A 237-amino-acid chain; its full sequence is Neurogenin-1 (237 aa).

The disordered stretch occupies residues 35–83 (LQQAASASGPPAPARRGAPNISRASEVPGAQDDEQERRRRRGRTRVRSE). Low complexity predominate over residues 38–53 (AASASGPPAPARRGAP). The bHLH domain occupies 92–144 (SRRVKANDRERNRMHNLNAALDALRSVLPSFPDDTKLTKIETLRFAYNYIWAL). The interval 175–209 (GPPSPASDAESWGSGAAAASPLSDPSSPAASEDFT) is disordered. Over residues 180–207 (ASDAESWGSGAAAASPLSDPSSPAASED) the composition is skewed to low complexity.

Efficient DNA binding requires dimerization with another bHLH protein. Expression restricted to the embryonic nervous system.

It is found in the nucleus. Its function is as follows. Acts as a transcriptional regulator. Involved in the initiation of neuronal differentiation. Activates transcription by binding to the E box (5'-CANNTG-3'). Associates with chromatin to enhancer regulatory elements in genes encoding key transcriptional regulators of neurogenesis. The sequence is that of Neurogenin-1 (NEUROG1) from Homo sapiens (Human).